A 667-amino-acid polypeptide reads, in one-letter code: Gamma-tubulin complex component 4 (667 aa).

A disordered region spans residues 425–445; that stretch reads HKADATQAREGPSRETSPREA.

The protein belongs to the TUBGCP family. Component of the gamma-tubulin ring complex (gTuRC) consisting of TUBGCP2, TUBGCP3, TUBGCP4, TUBGCP5 and TUBGCP6 and gamma-tubulin TUBG1 or TUBG2. TUBGCP2, TUBGCP3, TUBGCP4, TUBGCP5 and TUBGCP6 assemble in a 5:5:2:1:1 stoichiometry; each is associated with a gamma-tubulin, thereby arranging 14 gamma-tubulins in a helical manner. Gamma-tubulin at the first position is blocked by TUBGCP3 at the last position, allowing 13 protafilaments to grow into a microtubule. The gTuRC (via TUBGCP3 and TUBGCP6) interacts with ACTB and MZT1; the interactions form a luminal bridge that stabilizes the initial structure during complex assembly. The gTuRC (via TUBGCP2) interacts with MZT2A/MZT2B and CDK5RAP2 (via CM1 motif); the interactions play a role in gTuRC activation. Interacts with NINL. Interacts with ATF5; the ATF5:PCNT:polyglutamylated tubulin (PGT) tripartite unites the mother centriole and the pericentriolar material (PCM) in the centrosome. Ubiquitously expressed.

The protein resides in the cytoplasm. The protein localises to the cytoskeleton. Its subcellular location is the microtubule organizing center. It is found in the centrosome. Its function is as follows. Component of the gamma-tubulin ring complex (gTuRC) which mediates microtubule nucleation. The gTuRC regulates the minus-end nucleation of alpha-beta tubulin heterodimers that grow into microtubule protafilaments, a critical step in centrosome duplication and spindle formation. This chain is Gamma-tubulin complex component 4 (TUBGCP4), found in Homo sapiens (Human).